The primary structure comprises 911 residues: MFKQLSQIGKNLTDELAKGLADDMSPTPSEQQIEDDKSGLPKEIQAKLRKFEKYEQKYPLLLSAYKNEKLKSEKLEAVEKILAENTPISNIDDAVDTLPAFFQDLNNKNNLLNDEIKRLTKQNSEIPESASSETLKDKEEEFLKKEQNYKNDIDDLKKKMEALNIELDTVQKEKNDTVSGLREKIVALENILKEEREAKKQKEEVSISELKEELAIKNHSLEDSRMKITELEQNLSSKSTIMEEKSSELAELNITLKEKERKLSELEKKMKELPKAISHQNVGNNNRRKKNRNKGKKNKGGITTGDISEEETVDNSINTEEYDKLKENLQELQEKYKDCEDWKQKYEDIEAELKDAKELENSQLEKSAKELETLNTELIDTKKSLKEKNSELEEVRDMLRTVGNELVDAKDEIKESSSKQNEEVKTVKLELDDLRHKNATMIEAYEAKNTELRSKIELLSKKVEHLKNLCTEKEKEQTTSQNKVAKLNEEISQLTYEKSNITKELTSLRTSYKQKEKTVSYLEEQVKQFSEQKDVAEKSTEQLRKDHAKISNRLDLLKKENETLHNDIAKNSNSYEEYLKENGKLSERLNILQEKYNTLQNVKSNSNEHIDSIKRQCEELNVKLKESTKKILSLEDELNEYANIVQDKTREANTLRRLVSDSQTDDSSKQKELENKLAYLTDEKNKLEAELDLQTSRKATELQEWKHTVTELKSEIHALKLREEGLKSEVDALKHVNNDIKRKTQATSDDSDQLEQITSNLKLSLSKADEKNFELQSANEKLLNLNNELNKKFDRLLKNYRSLSSQLNALKERQYSDKSGRVSRSGSIGTLANANIDSSPANNSNPTKLEKIRSSSSLELDSEKNEKIAYIKNVLLGFLEHKEQRNQLLPVISMLLQLDSTDEKRLVMSLK.

Disordered stretches follow at residues 16–41 and 271–314; these read LAKGLADDMSPTPSEQQIEDDKSGLP and KELP…ETVD. Positions 101-280 form a coiled coil; sequence FFQDLNNKNN…KELPKAISHQ (180 aa). Residues 286-299 are compositionally biased toward basic residues; that stretch reads NRRKKNRNKGKKNK. 2 positions are modified to phosphoserine: S308 and S660. 2 coiled-coil regions span residues 312–735 and 766–814; these read TVDN…ALKH and SKAD…KERQ. Positions 814-850 are disordered; that stretch reads QYSDKSGRVSRSGSIGTLANANIDSSPANNSNPTKLE. Residues 822 to 847 are compositionally biased toward polar residues; the sequence is VSRSGSIGTLANANIDSSPANNSNPT. A Phosphoserine modification is found at S827. Residue T830 is modified to Phosphothreonine. The GRIP domain occupies 861–909; that stretch reads DSEKNEKIAYIKNVLLGFLEHKEQRNQLLPVISMLLQLDSTDEKRLVMS.

As to quaternary structure, forms oligomers and is present in high-molecular-mass complexes. Interacts with ARL1.

The protein localises to the cytoplasm. It localises to the golgi apparatus membrane. In terms of biological role, involved in vesicular transport between an endosomal compartment and the Golgi apparatus. The protein is Golgin IMH1 (IMH1) of Saccharomyces cerevisiae (strain ATCC 204508 / S288c) (Baker's yeast).